The chain runs to 208 residues: Glutathione S-transferase GstB (208 aa).

Positions 1–83 (MITLWGRNNS…YLAAQYGQKR (83 aa)) constitute a GST N-terminal domain. Residues Asn12, Asn39, Val53, and 67 to 68 (ES) contribute to the glutathione site. Residues 88-208 (SPARRAEAEK…VRKVVMIPVS (121 aa)) form the GST C-terminal domain.

The protein belongs to the GST superfamily.

The enzyme catalyses RX + glutathione = an S-substituted glutathione + a halide anion + H(+). Functionally, conjugation of reduced glutathione to a wide number of exogenous and endogenous hydrophobic electrophiles. The sequence is that of Glutathione S-transferase GstB (gstB) from Escherichia coli O6:H1 (strain CFT073 / ATCC 700928 / UPEC).